Here is a 466-residue protein sequence, read N- to C-terminus: Reticulophagy regulator 3 (466 aa).

Over 1-80 the chain is Cytoplasmic; sequence MEEAEGVAAA…WCLGLNAAFW (80 aa). At Ser-26 the chain carries Phosphoserine. Residues 81 to 101 traverse the membrane as a helical segment; the sequence is FFALTSLRFVFLLAFSLMIIV. Residues 102 to 168 are Lumenal-facing; the sequence is CIDQWKNKIW…LLFKKQNPGK (67 aa). A helical membrane pass occupies residues 169 to 187; the sequence is FCLLSCGVLTFLAMLGRYI. The Cytoplasmic segment spans residues 188-192; that stretch reads PGLLL. Residues 193–211 form a helical membrane-spanning segment; the sequence is SYLMLVIIMMWPLAVYHRL. Residues 212–381 are Lumenal-facing; sequence WDRAYVRLKP…ASRNEAALPE (170 aa). Positions 244-263 are disordered; the sequence is RRRALHSERATDSHSDSEEE. Residues 248 to 259 show a composition bias toward basic and acidic residues; the sequence is LHSERATDSHSD. Position 254 is a phosphothreonine (Thr-254). 2 positions are modified to phosphoserine: Ser-258 and Ser-260. Thr-283 is modified (phosphothreonine). 4 positions are modified to phosphoserine: Ser-285, Ser-288, Ser-293, and Ser-303. Positions 285 to 335 are disordered; that stretch reads SEHSDAEVSCTENGTFNLSRGQTPLTEGSEDLDGHSDPEESFARDLPDFPS. Polar residues predominate over residues 294 to 310; that stretch reads CTENGTFNLSRGQTPLT. Phosphothreonine is present on residues Thr-307 and Thr-310. Phosphoserine is present on residues Ser-313, Ser-320, and Ser-360. The span at 316 to 331 shows a compositional bias: basic and acidic residues; it reads LDGHSDPEESFARDLP. Residues 382–401 traverse the membrane as a helical segment; sequence LLLSSLPGGSNLTSNLASLV. Residues 402–466 are Cytoplasmic-facing; the sequence is SQGMIQLALS…QLDPASSRSH (65 aa). Residues 412 to 444 form a disordered region; that stretch reads EASQTDPSGPPPRRATRGFLRAPSSDLDTDAEG. Phosphothreonine is present on Thr-440. The LIR motif signature appears at 445-450; that stretch reads DDFELL.

The protein belongs to the RETREG family. As to quaternary structure, interacts with ATG8 family modifier proteins MAP1LC3A, MAP1LC3B, GABARAPL1 and GABARAPL2. Also interacts with ATG8 family modifier protein GABARAP. Interacts with CANX. Interacts with RTN4 isoform B. In terms of tissue distribution, widely expressed with highest levels in brain, lung, liver, muscle and spleen (protein level). Mainly expressed in the central nervous system and in parenchymatous organs including liver, lung and kidney.

The protein resides in the endoplasmic reticulum membrane. Endoplasmic reticulum (ER)-anchored autophagy regulator which exists in an inactive state under basal conditions but is activated following cellular stress. When activated, induces ER fragmentation and mediates ER delivery into lysosomes through sequestration into autophagosomes via interaction with ATG8 family proteins. Promotes ER membrane curvature and ER tubulation required for subsequent ER fragmentation and engulfment into autophagosomes. Required for collagen quality control in a LIR motif-dependent manner. Mediates NRF1-enhanced neurite outgrowth. The protein is Reticulophagy regulator 3 (Retreg3) of Mus musculus (Mouse).